A 122-amino-acid chain; its full sequence is Structural protein p14.5 (122 aa).

Disordered stretches follow at residues 1 to 27 and 85 to 122; these read MADF…LEYD and TSLV…HKSK. Ala-2 is modified (N-acetylalanine; by host). Over residues 105-122 the composition is skewed to basic residues; that stretch reads KPKKKKHLFPKLSSHKSK.

Belongs to the asfivirus structural protein p14.5 family. In terms of assembly, interacts with the major capsid protein. Interacts with host IRF3; this interaction interferes with the recruitment of IRF3 to TBK1. Post-translationally, acetylated.

Its subcellular location is the virion. In terms of biological role, structural protein required for transport of intracellular particles from the assembly sites to the plasma membrane. Binds to both ssDNA and dsDNA. Suppressed the activation of the cGAS/STING pathway by interfering with the recruitment of IRF3 to TBK1, which in turn suppresses IRF3 phosphorylation, decreasing interferon production. This African swine fever virus (isolate Tick/Malawi/Lil 20-1/1983) (ASFV) protein is Structural protein p14.5.